The sequence spans 261 residues: MSVLQELTKKKYSSLKTMFDDKYCPTFVYSILDQTIPGAVYADDQTFPKSFFIGTESGIYFIAGDQGNRDFHDFIAGYYEEQVKSSKRFTLFSSSDTWDSVLKPILKDDLNQMRRAAFSYQPKSFKKTLQLPKGLVLKRIDEDIISHSTAFNSAYYEEYWNSVSQFASKGFGFAVLHGNHVVSECTSIFLGHNRAEMDIYTLEEYRGLGLAYCVANRFIAFCMENGIVPSWDCDICNNSSIALAAKLGFKTVTEYTIYYSG.

Residues 135 to 261 form the N-acetyltransferase domain; that stretch reads LVLKRIDEDI…VTEYTIYYSG (127 aa).

The protein belongs to the acetyltransferase family.

This is an uncharacterized protein from Bacillus subtilis (strain 168).